The chain runs to 280 residues: Nucleotide-binding protein CV_3336 (280 aa).

8 to 15 provides a ligand contact to ATP; it reads GLSGSGKS. Position 57–60 (57–60) interacts with GTP; that stretch reads DTRS.

The protein belongs to the RapZ-like family.

Functionally, displays ATPase and GTPase activities. The protein is Nucleotide-binding protein CV_3336 of Chromobacterium violaceum (strain ATCC 12472 / DSM 30191 / JCM 1249 / CCUG 213 / NBRC 12614 / NCIMB 9131 / NCTC 9757 / MK).